We begin with the raw amino-acid sequence, 97 residues long: DNA-directed RNA polymerase subunit omega (97 aa).

A compositionally biased stretch (polar residues) spans 1 to 16 (MSTPNALAAFNSSPSL). Positions 1-21 (MSTPNALAAFNSSPSLNAPEG) are disordered.

Belongs to the RNA polymerase subunit omega family. As to quaternary structure, the RNAP catalytic core consists of 2 alpha, 1 beta, 1 beta' and 1 omega subunit. When a sigma factor is associated with the core the holoenzyme is formed, which can initiate transcription.

The enzyme catalyses RNA(n) + a ribonucleoside 5'-triphosphate = RNA(n+1) + diphosphate. Promotes RNA polymerase assembly. Latches the N- and C-terminal regions of the beta' subunit thereby facilitating its interaction with the beta and alpha subunits. In Saccharopolyspora erythraea (strain ATCC 11635 / DSM 40517 / JCM 4748 / NBRC 13426 / NCIMB 8594 / NRRL 2338), this protein is DNA-directed RNA polymerase subunit omega.